The primary structure comprises 321 residues: Chloroplastic calcium uniporter protein (321 aa).

Residues 1–56 (MSSKKSLVQSLFNISKTYSRISGLTRMRPTKSGGIPPDAGDSGIRRRFLHKRAFFS) constitute a chloroplast transit peptide. Helical transmembrane passes span 223–243 (LWAG…LTFW) and 249–269 (VMEP…YAFF). A Selectivity filter motif is present at residues 247–255 (WDVMEPICF). Glu251 provides a ligand contact to Ca(2+).

This sequence belongs to the MCU (TC 1.A.77) family.

The protein localises to the plastid. The protein resides in the chloroplast membrane. It catalyses the reaction Ca(2+)(in) = Ca(2+)(out). In terms of biological role, chloroplastic membrane calcium uniporter that mediates calcium uptake into chloroplast stroma. Constitutes a pore-forming and calcium-conducting subunit. Chloroplastic calcium homeostasis plays key roles in cellular physiology. Promotes calcium uptake into chloroplast stroma in response to osmotic-stress, fine-tuning cytosolic MAPK3/MAPK6 phosphorylation and affecting stomata opening. The sequence is that of Chloroplastic calcium uniporter protein from Arabidopsis thaliana (Mouse-ear cress).